Reading from the N-terminus, the 227-residue chain is Lipoprotein-releasing system ATP-binding protein LolD (227 aa).

The 223-residue stretch at 5 to 227 (LICQNITKHY…QDGILRESNS (223 aa)) folds into the ABC transporter domain. An ATP-binding site is contributed by 41-48 (GSSGSGKS).

The protein belongs to the ABC transporter superfamily. Lipoprotein translocase (TC 3.A.1.125) family. In terms of assembly, the complex is composed of two ATP-binding proteins (LolD) and two transmembrane proteins (LolC and LolE).

Its subcellular location is the cell inner membrane. In terms of biological role, part of the ABC transporter complex LolCDE involved in the translocation of mature outer membrane-directed lipoproteins, from the inner membrane to the periplasmic chaperone, LolA. Responsible for the formation of the LolA-lipoprotein complex in an ATP-dependent manner. This chain is Lipoprotein-releasing system ATP-binding protein LolD, found in Histophilus somni (strain 129Pt) (Haemophilus somnus).